The primary structure comprises 539 residues: Putative dimethylaniline monooxygenase [N-oxide-forming] 6 (539 aa).

FAD-binding positions include 9–13, glutamate 32, 40–41, and 61–62; these read GAGVS, LW, and NS. Residue 195–198 coordinates NADP(+); that stretch reads SGSD. Residues 518–538 traverse the membrane as a helical segment; it reads FYNLLKMLSFPLLLLAVTLTF.

Belongs to the FMO family. FAD is required as a cofactor.

It localises to the microsome membrane. The protein resides in the endoplasmic reticulum membrane. It carries out the reaction N,N-dimethylaniline + NADPH + O2 + H(+) = N,N-dimethylaniline N-oxide + NADP(+) + H2O. Functionally, it is probable that this protein is only produced in very small quantity or not at all as the gene coding for it seems to be unable to produce full-length transcripts. This is Putative dimethylaniline monooxygenase [N-oxide-forming] 6 (FMO6P) from Homo sapiens (Human).